We begin with the raw amino-acid sequence, 291 residues long: MKRVVLFLFTNLAVMLVLSVSARVLGVDRFLTGNGLDMGMLLLFAALIGFGGSFISLLMSKTMAKWSTGARVIQQPANQNEVWLVDTVSQLSKKAGLAMPEVAIYDGAPNAFATGPSKSRSLVAVSTGLLQSMDRKQVEAVLAHEVAHIDNGDMVTLTLIQGVLNTFVIFLSRVIAYAIDSFLRSDDDESGSPGIGYWISSIIFEIMFGILASVVVMYFSRKREYRADAGAAVLLGDRRPMIDALRALGGLQAGQLPKEMAASGIAGGGMMALFSSHPPLESRIAALESAR.

The next 2 membrane-spanning stretches (helical) occupy residues 4 to 24 and 38 to 58; these read VVLFLFTNLAVMLVLSVSARV and MGMLLLFAALIGFGGSFISLL. Zn(2+) is bound at residue H144. E145 is a catalytic residue. Zn(2+) is bound at residue H148. Transmembrane regions (helical) follow at residues 159 to 179 and 199 to 219; these read LIQGVLNTFVIFLSRVIAYAI and ISSIIFEIMFGILASVVVMYF. Residue E224 participates in Zn(2+) binding.

It belongs to the peptidase M48B family. It depends on Zn(2+) as a cofactor.

Its subcellular location is the cell inner membrane. The protein is Protease HtpX homolog of Chlorobium phaeobacteroides (strain DSM 266 / SMG 266 / 2430).